The primary structure comprises 84 residues: SPbeta prophage-derived uncharacterized protein YomY (84 aa).

This Bacillus subtilis (strain 168) protein is SPbeta prophage-derived uncharacterized protein YomY (yomY).